We begin with the raw amino-acid sequence, 550 residues long: Hydroxylamine reductase (550 aa).

Residues C4, C7, C19, and C26 each contribute to the [2Fe-2S] cluster site. Hybrid [4Fe-2O-2S] cluster is bound by residues H249, E273, C317, C405, C433, C458, E492, and K494. Cysteine persulfide is present on C405.

Belongs to the HCP family. Requires [2Fe-2S] cluster as cofactor. The cofactor is hybrid [4Fe-2O-2S] cluster.

It localises to the cytoplasm. The catalysed reaction is A + NH4(+) + H2O = hydroxylamine + AH2 + H(+). Catalyzes the reduction of hydroxylamine to form NH(3) and H(2)O. In Aeromonas salmonicida (strain A449), this protein is Hydroxylamine reductase.